A 363-amino-acid polypeptide reads, in one-letter code: Pyrimidine monooxygenase RutA (363 aa).

Residues 49–50, Asn115, Glu124, 140–141, and Ser190 contribute to the FMN site; these read IK and RY.

This sequence belongs to the NtaA/SnaA/DszA monooxygenase family. RutA subfamily.

It carries out the reaction uracil + FMNH2 + NADH + O2 = (Z)-3-ureidoacrylate + FMN + NAD(+) + H2O + H(+). The enzyme catalyses thymine + FMNH2 + NADH + O2 = (Z)-2-methylureidoacrylate + FMN + NAD(+) + H2O + H(+). Functionally, catalyzes the pyrimidine ring opening between N-3 and C-4 by an unusual flavin hydroperoxide-catalyzed mechanism, adding oxygen atoms in the process to yield ureidoacrylate peracid, that immediately reacts with FMN forming ureidoacrylate and FMN-N(5)-oxide. The FMN-N(5)-oxide reacts spontaneously with NADH to produce FMN. Requires the flavin reductase RutF to regenerate FMN in vivo. The protein is Pyrimidine monooxygenase RutA of Escherichia coli O44:H18 (strain 042 / EAEC).